Reading from the N-terminus, the 131-residue chain is Interleukin-13 (131 aa).

An N-terminal signal peptide occupies residues 1–18; sequence MALWLTVVIALTCLGGLA. Residues asparagine 38, asparagine 48, asparagine 56, and asparagine 71 are each glycosylated (N-linked (GlcNAc...) asparagine). Cystine bridges form between cysteine 47-cysteine 75 and cysteine 63-cysteine 89.

This sequence belongs to the IL-4/IL-13 family. Interacts with IL13RA2.

It localises to the secreted. Its function is as follows. Cytokine that plays important roles in allergic inflammation and immune response to parasite infection. Synergizes with IL2 in regulating interferon-gamma synthesis. Stimulates B-cell proliferation, and activation of eosinophils, basophils, and mast cells. Plays an important role in controlling IL33 activity by modulating the production of transmembrane and soluble forms of interleukin-1 receptor-like 1/IL1RL1. Displays the capacity to antagonize Th1-driven proinflammatory immune response and downregulates synthesis of many proinflammatory cytokines including IL1, IL6, IL10, IL12 and TNF-alpha through a mechanism that partially involves suppression of NF-kappa-B. Also functions on nonhematopoietic cells, including endothelial cells where it induces vascular cell adhesion protein 1/VCAM1, which is important in the recruitment of eosinophils. Exerts its biological effects through its receptors which comprises the IL4R chain and the IL13RA1 chain, to activate JAK1 and TYK2, leading to the activation of STAT6. Aside from IL13RA1, another receptor IL13RA2 acts as a high affinity decoy for IL13 and mediates internalization and depletion of extracellular IL13. In Canis lupus familiaris (Dog), this protein is Interleukin-13 (IL13).